The primary structure comprises 358 residues: Methylthioribose-1-phosphate isomerase (358 aa).

Substrate contacts are provided by residues 54–56 (CGA) and Gln205. Asp246 serves as the catalytic Proton donor. Residue 256–257 (NQ) coordinates substrate.

The protein belongs to the eIF-2B alpha/beta/delta subunits family. MtnA subfamily.

The enzyme catalyses 5-(methylsulfanyl)-alpha-D-ribose 1-phosphate = 5-(methylsulfanyl)-D-ribulose 1-phosphate. Its pathway is amino-acid biosynthesis; L-methionine biosynthesis via salvage pathway; L-methionine from S-methyl-5-thio-alpha-D-ribose 1-phosphate: step 1/6. Catalyzes the interconversion of methylthioribose-1-phosphate (MTR-1-P) into methylthioribulose-1-phosphate (MTRu-1-P). This chain is Methylthioribose-1-phosphate isomerase, found in Pseudomonas fluorescens (strain ATCC BAA-477 / NRRL B-23932 / Pf-5).